A 310-amino-acid polypeptide reads, in one-letter code: Transcription factor RAX3 (310 aa).

2 consecutive HTH myb-type domains span residues K9 to L62 and R63 to L117. 2 consecutive DNA-binding regions (H-T-H motif) follow at residues W38–L62 and W90–L113.

Ubiquitous.

The protein resides in the nucleus. Functionally, transcription activator. Positively regulates axillary meristems (AMs) formation and development, especially during inflorescence. The chain is Transcription factor RAX3 (RAX3) from Arabidopsis thaliana (Mouse-ear cress).